The chain runs to 368 residues: DNA replication and repair protein RecF (368 aa).

30–37 (GNNAQGKT) provides a ligand contact to ATP.

Belongs to the RecF family.

Its subcellular location is the cytoplasm. Functionally, the RecF protein is involved in DNA metabolism; it is required for DNA replication and normal SOS inducibility. RecF binds preferentially to single-stranded, linear DNA. It also seems to bind ATP. In Streptococcus pyogenes serotype M4 (strain MGAS10750), this protein is DNA replication and repair protein RecF.